A 344-amino-acid polypeptide reads, in one-letter code: Uroporphyrinogen decarboxylase (344 aa).

Residues 26–30 (RQAGR), Asp76, Tyr152, Ser207, and His323 each bind substrate.

Belongs to the uroporphyrinogen decarboxylase family. In terms of assembly, homodimer.

Its subcellular location is the cytoplasm. The enzyme catalyses uroporphyrinogen III + 4 H(+) = coproporphyrinogen III + 4 CO2. Its pathway is porphyrin-containing compound metabolism; protoporphyrin-IX biosynthesis; coproporphyrinogen-III from 5-aminolevulinate: step 4/4. Catalyzes the decarboxylation of four acetate groups of uroporphyrinogen-III to yield coproporphyrinogen-III. This Hyphomonas neptunium (strain ATCC 15444) protein is Uroporphyrinogen decarboxylase.